The primary structure comprises 58 residues: uncharacterized protein (58 aa).

Its subcellular location is the plastid. The protein resides in the chloroplast. This is an uncharacterized protein from Pyropia yezoensis (Susabi-nori).